A 199-amino-acid polypeptide reads, in one-letter code: NAD(P)H dehydrogenase (quinone) (199 aa).

In terms of domain architecture, Flavodoxin-like spans 4–190 (MLVLYYSAYG…DGARFQGRRV (187 aa)). FMN contacts are provided by residues 10 to 15 (SAYGHM) and 78 to 80 (TRY). Y12 contacts NAD(+). W98 contributes to the substrate binding site. Residues 113–119 (STATQYG) and H134 each bind FMN. A disordered region spans residues 161–181 (YGMTTTADGDGSRQPSAQELD). Residues 163–177 (MTTTADGDGSRQPSA) are compositionally biased toward polar residues.

This sequence belongs to the WrbA family. It depends on FMN as a cofactor.

It catalyses the reaction a quinone + NADH + H(+) = a quinol + NAD(+). The enzyme catalyses a quinone + NADPH + H(+) = a quinol + NADP(+). The chain is NAD(P)H dehydrogenase (quinone) from Brucella canis (strain ATCC 23365 / NCTC 10854 / RM-666).